The primary structure comprises 267 residues: tRNA pseudouridine synthase A (267 aa).

The active-site Nucleophile is Asp-54. Tyr-114 contributes to the substrate binding site.

This sequence belongs to the tRNA pseudouridine synthase TruA family. As to quaternary structure, homodimer.

It carries out the reaction uridine(38/39/40) in tRNA = pseudouridine(38/39/40) in tRNA. Its function is as follows. Formation of pseudouridine at positions 38, 39 and 40 in the anticodon stem and loop of transfer RNAs. The chain is tRNA pseudouridine synthase A from Tropheryma whipplei (strain TW08/27) (Whipple's bacillus).